The following is a 593-amino-acid chain: Developmental and secondary metabolism regulator VEL1 (593 aa).

Polar residues predominate over residues 1–16 (MSNIVVSNETKSQSVR). The segment at 1-21 (MSNIVVSNETKSQSVRTTKDG) is disordered. One can recognise a Velvet domain in the interval 21 to 212 (GRQIRYNLQV…AEQGCRVRIR (192 aa)). The short motif at 35 to 40 (ERARAC) is the Nuclear localization signal element. Residues 218–569 (RRRENKSSKE…PGSPDMEEPM (352 aa)) form a disordered region. Over residues 310–326 (PSYGSNQPQYSQQYQTP) the composition is skewed to low complexity. The segment covering 327–340 (QPAPMMQPPQPPQH) has biased composition (pro residues). Low complexity-rich tracts occupy residues 341–360 (STPY…HQAQ) and 367–389 (QQYG…QPQY). Composition is skewed to polar residues over residues 413–429 (SSIT…SSHP) and 440–449 (GRSQQMSQPL). A PEST region spans residues 443–487 (QQMSQPLHSSPQSYASSAPSHQSLPSLRPIVADKLEPVSPSYQSP). Residues 450 to 465 (HSSPQSYASSAPSHQS) are compositionally biased toward low complexity. Composition is skewed to polar residues over residues 482-505 (PSYQ…SNQH) and 512-534 (NPQT…SSTF).

This sequence belongs to the velvet family. VeA subfamily. As to quaternary structure, component of the heterotrimeric velvet complex composed of LAE1, VEL1 and VEL2; VEL1 acting as a bridging protein between LAE1 and VEL2.

Its subcellular location is the nucleus. It localises to the cytoplasm. Functionally, component of the velvet transcription factor complex that controls sexual/asexual developmental ratio in response to light, promoting sexual development in the darkness while stimulating asexual sporulation under illumination. The velvet complex acts as a global regulator for secondary metabolite gene expression. Controls the expression of the T-toxin gene cluster. Promotes oxidative stress tolerance and acts as a virulence factors during infection. Negatively regulate mycelial pigmentation and controls sexual development, as well as asexual development during vegetative growth. The sequence is that of Developmental and secondary metabolism regulator VEL1 from Cochliobolus heterostrophus (strain C5 / ATCC 48332 / race O) (Southern corn leaf blight fungus).